We begin with the raw amino-acid sequence, 1055 residues long: Cell-division control histidine kinase PdhS (1055 aa).

The tract at residues 1–626 (MSGSYPFIDI…RANGSEEPVD (626 aa)) is important for polar localization. The disordered stretch occupies residues 419–439 (DDSPVATLPKPPLDIAPTPGR). The tract at residues 627-1055 (AHLNAISWRE…AFPPTRVLAD (429 aa)) is interaction with DivK. A PAS domain is found at 679 to 750 (HVEELKTILD…YLHGLSGNGV (72 aa)). A Histidine kinase domain is found at 822 to 1051 (RISHEIRTPL…VVEIAFPPTR (230 aa)). His-825 bears the Phosphohistidine; by autocatalysis mark.

As to quaternary structure, interacts with DivK.

Its subcellular location is the cytoplasm. It catalyses the reaction ATP + protein L-histidine = ADP + protein N-phospho-L-histidine.. Functionally, functions as a polar differentiation marker. Essential protein that, by localizing in the old pole of dividing cells, controls cell division and maturation, probably through control of DivK phosphorylation status and cellular distribution, which in turn regulates CtrA, a transcriptional regulator of the minB operon. The asymmetrical localization of this protein is probably required for cells to enter a new division cycle. This chain is Cell-division control histidine kinase PdhS (pdhS), found in Brucella anthropi (strain ATCC 49188 / DSM 6882 / CCUG 24695 / JCM 21032 / LMG 3331 / NBRC 15819 / NCTC 12168 / Alc 37) (Ochrobactrum anthropi).